The primary structure comprises 500 residues: 4-aminobutyrate aminotransferase, mitochondrial (500 aa).

Residues 1 to 28 (MASMLVAQRLACSFQHSYRLLVPGSRHI) constitute a mitochondrion transit peptide. Cys-163 is a binding site for [2Fe-2S] cluster. Position 164–165 (164–165 (GS)) interacts with pyridoxal 5'-phosphate. Residue Cys-166 coordinates [2Fe-2S] cluster. Arg-220 serves as a coordination point for substrate. Lys-231 is subject to N6-succinyllysine. An N6-acetyllysine; alternate modification is found at Lys-252. N6-succinyllysine; alternate is present on Lys-252. An N6-acetyllysine mark is found at Lys-279 and Lys-318. Lys-357 bears the N6-(pyridoxal phosphate)lysine mark. Residue Thr-381 coordinates pyridoxal 5'-phosphate. Lys-413 carries the N6-acetyllysine; alternate modification. At Lys-413 the chain carries N6-succinyllysine; alternate. N6-acetyllysine occurs at positions 452 and 470.

Belongs to the class-III pyridoxal-phosphate-dependent aminotransferase family. Homodimer; disulfide-linked. Pyridoxal 5'-phosphate serves as cofactor. It depends on [2Fe-2S] cluster as a cofactor.

Its subcellular location is the mitochondrion matrix. The catalysed reaction is 4-aminobutanoate + 2-oxoglutarate = succinate semialdehyde + L-glutamate. The enzyme catalyses (S)-3-amino-2-methylpropanoate + 2-oxoglutarate = 2-methyl-3-oxopropanoate + L-glutamate. Its function is as follows. Catalyzes the conversion of gamma-aminobutyrate and L-beta-aminoisobutyrate to succinate semialdehyde and methylmalonate semialdehyde, respectively. Can also convert delta-aminovalerate and beta-alanine. The protein is 4-aminobutyrate aminotransferase, mitochondrial (ABAT) of Bos taurus (Bovine).